The chain runs to 481 residues: Glutamate--tRNA ligase (481 aa).

The short motif at 28-38 is the 'HIGH' region element; it reads PSPTGFLHLGG. Residues 139–148 show a composition bias toward basic and acidic residues; that stretch reads RYDGTWRPEP. Positions 139–159 are disordered; the sequence is RYDGTWRPEPGKTLPPVPADR. Positions 260–264 match the 'KMSKS' region motif; that stretch reads KLSKR. Residue lysine 263 participates in ATP binding.

This sequence belongs to the class-I aminoacyl-tRNA synthetase family. Glutamate--tRNA ligase type 1 subfamily. Monomer.

It localises to the cytoplasm. The catalysed reaction is tRNA(Glu) + L-glutamate + ATP = L-glutamyl-tRNA(Glu) + AMP + diphosphate. Functionally, catalyzes the attachment of glutamate to tRNA(Glu) in a two-step reaction: glutamate is first activated by ATP to form Glu-AMP and then transferred to the acceptor end of tRNA(Glu). This Bordetella parapertussis (strain 12822 / ATCC BAA-587 / NCTC 13253) protein is Glutamate--tRNA ligase.